Consider the following 422-residue polypeptide: Glucose-1-phosphate adenylyltransferase (422 aa).

Alpha-D-glucose 1-phosphate is bound by residues Y108, G173, 188-189 (EK), and S206.

It belongs to the bacterial/plant glucose-1-phosphate adenylyltransferase family. As to quaternary structure, homotetramer.

It catalyses the reaction alpha-D-glucose 1-phosphate + ATP + H(+) = ADP-alpha-D-glucose + diphosphate. It participates in glycan biosynthesis; glycogen biosynthesis. In terms of biological role, involved in the biosynthesis of ADP-glucose, a building block required for the elongation reactions to produce glycogen. Catalyzes the reaction between ATP and alpha-D-glucose 1-phosphate (G1P) to produce pyrophosphate and ADP-Glc. The sequence is that of Glucose-1-phosphate adenylyltransferase from Paraburkholderia phymatum (strain DSM 17167 / CIP 108236 / LMG 21445 / STM815) (Burkholderia phymatum).